A 185-amino-acid chain; its full sequence is ATP synthase subunit b 2 (185 aa).

Positions 1 to 23 (MAEGHGDAKGATAHTAADGGHKA) are disordered. Residues 9 to 18 (KGATAHTAAD) are compositionally biased toward low complexity. A helical transmembrane segment spans residues 37-57 (LVSLTIAFVALYLIVSKIILP).

This sequence belongs to the ATPase B chain family. As to quaternary structure, F-type ATPases have 2 components, F(1) - the catalytic core - and F(0) - the membrane proton channel. F(1) has five subunits: alpha(3), beta(3), gamma(1), delta(1), epsilon(1). F(0) has three main subunits: a(1), b(2) and c(10-14). The alpha and beta chains form an alternating ring which encloses part of the gamma chain. F(1) is attached to F(0) by a central stalk formed by the gamma and epsilon chains, while a peripheral stalk is formed by the delta and b chains.

The protein resides in the cell inner membrane. In terms of biological role, f(1)F(0) ATP synthase produces ATP from ADP in the presence of a proton or sodium gradient. F-type ATPases consist of two structural domains, F(1) containing the extramembraneous catalytic core and F(0) containing the membrane proton channel, linked together by a central stalk and a peripheral stalk. During catalysis, ATP synthesis in the catalytic domain of F(1) is coupled via a rotary mechanism of the central stalk subunits to proton translocation. Its function is as follows. Component of the F(0) channel, it forms part of the peripheral stalk, linking F(1) to F(0). The b'-subunit is a diverged and duplicated form of b found in plants and photosynthetic bacteria. This is ATP synthase subunit b 2 (atpF2) from Rhodopseudomonas palustris (strain BisB5).